Consider the following 396-residue polypeptide: NADH-ubiquinone oxidoreductase 49 kDa subunit (396 aa).

Belongs to the complex I 49 kDa subunit family.

The protein localises to the mitochondrion. It carries out the reaction a ubiquinone + NADH + 5 H(+)(in) = a ubiquinol + NAD(+) + 4 H(+)(out). Its function is as follows. Core subunit of the mitochondrial membrane respiratory chain NADH dehydrogenase (Complex I) that is believed to belong to the minimal assembly required for catalysis. Complex I functions in the transfer of electrons from NADH to the respiratory chain. The immediate electron acceptor for the enzyme is believed to be ubiquinone. Component of the iron-sulfur (IP) fragment of the enzyme. Component of the iron-sulfur (IP) fragment of the enzyme. The sequence is that of NADH-ubiquinone oxidoreductase 49 kDa subunit (NAD7) from Reclinomonas americana.